Reading from the N-terminus, the 1845-residue chain is Histone-lysine N-methyltransferase, H3 lysine-79 specific (1845 aa).

Polar residues predominate over residues 1 to 44; sequence MSTNSTPRKQKLSNSKSLQNSPISPTVKKTNSFPLGNNIPTNIN. Disordered stretches follow at residues 1 to 67, 83 to 306, 450 to 470, 486 to 571, 585 to 681, 741 to 767, 862 to 881, and 963 to 1102; these read MSTN…NGIG, PPLP…NKWT, SHDI…NKNK, QKLK…TERK, RKER…NDSY, GETF…KKIE, QTTK…AETE, and KDNP…SNSL. Low complexity-rich tracts occupy residues 52-67, 90-162, 191-226, and 239-263; these read NNSN…NGIG, SSSS…QQEP, PSTP…SNNS, and NNNN…NNNN. Residues 268–280 are compositionally biased toward acidic residues; it reads VIDDDDDDDDDEG. Residues 282 to 294 show a composition bias toward polar residues; that stretch reads SIKSTHTSTQSTP. A compositionally biased stretch (basic and acidic residues) spans 295–304; that stretch reads IRDRRQRDNK. The span at 453–464 shows a compositional bias: low complexity; sequence INNNNNNNNNNK. Positions 585 to 679 are enriched in basic and acidic residues; it reads RKERERKERK…IEKERREKND (95 aa). Residues 625-639 form a required for interaction with nucleosomes and DNA region; the sequence is KKKEKEKEKEKEKEK. 4 stretches are compositionally biased toward low complexity: residues 750–763, 862–877, 972–1011, and 1020–1067; these read NNNN…NNNN, QTTK…TTTT, NNNR…RNNN, and NNNN…NNTI. Over residues 1069–1080 the composition is skewed to basic and acidic residues; the sequence is KKIETIKKDINK. A compositionally biased stretch (low complexity) spans 1084–1102; sequence KTTTTTSSSSSSTSSSNSL. A DOT1 domain is found at 1125–1446; it reads FDVGIGVPVT…KDSDIVTDQT (322 aa). Residues 1251-1254, 1274-1283, and E1300 contribute to the S-adenosyl-L-methionine site; these read YGEA and FCDIGCGIGN. Disordered regions lie at residues 1463-1559, 1610-1661, 1735-1762, 1772-1791, and 1799-1845; these read LQLF…NKPI, RISP…SSND, HQKS…KKEQ, NYNN…NHNN, and TDLI…DNNK. 3 stretches are compositionally biased toward low complexity: residues 1467–1522, 1541–1556, and 1610–1642; these read SSSS…TPNS, NNNN…NSNN, and RISP…SSSD. The segment covering 1643 to 1656 has biased composition (acidic residues); the sequence is NENDDDNGDDEDDS. A compositionally biased stretch (basic residues) spans 1745–1759; the sequence is RLSRKQKKLAKKNKK. 2 stretches are compositionally biased toward low complexity: residues 1799-1817 and 1835-1845; these read TDLI…INND and KDYNNINDNNK.

It belongs to the class I-like SAM-binding methyltransferase superfamily. DOT1 family.

The protein localises to the nucleus. The catalysed reaction is L-lysyl(79)-[histone H3] + 3 S-adenosyl-L-methionine = N(6),N(6),N(6)-trimethyl-L-lysyl(79)-[histone H3] + 3 S-adenosyl-L-homocysteine + 3 H(+). In terms of biological role, histone methyltransferase that specifically methylates histone H3 to form H3K79me. This methylation is required for telomere silencing, correct growth and development, and for resistance to DNA damage induced by UV LIGHT. The chain is Histone-lysine N-methyltransferase, H3 lysine-79 specific from Dictyostelium discoideum (Social amoeba).